Reading from the N-terminus, the 381-residue chain is 3-hydroxyisobutyryl-CoA hydrolase, mitochondrial (381 aa).

The N-terminal 25 residues, methionine 1–valine 25, are a transit peptide targeting the mitochondrion. Positions 116, 141, 164, and 172 each coordinate substrate.

This sequence belongs to the enoyl-CoA hydratase/isomerase family.

Its subcellular location is the mitochondrion. It catalyses the reaction 3-hydroxy-2-methylpropanoyl-CoA + H2O = 3-hydroxy-2-methylpropanoate + CoA + H(+). It functions in the pathway amino-acid degradation; L-valine degradation. Its function is as follows. Hydrolyzes 3-hydroxyisobutyryl-CoA (HIBYL-CoA), a saline catabolite. This chain is 3-hydroxyisobutyryl-CoA hydrolase, mitochondrial (hibch), found in Dictyostelium discoideum (Social amoeba).